A 72-amino-acid polypeptide reads, in one-letter code: LITAF domain-containing protein (72 aa).

Residues 1-71 form the LITAF domain; sequence MPVQAVCPYC…CQRELFYYHR (71 aa). 2 residues coordinate Zn(2+): cysteine 7 and cysteine 10. The interval 22-45 is membrane-binding amphipathic helix; that stretch reads PGALTWLLCTTLFLFGYVLGCCFL. 2 residues coordinate Zn(2+): cysteine 59 and cysteine 62.

This sequence belongs to the CDIP1/LITAF family.

It localises to the membrane. This is LITAF domain-containing protein from Homo sapiens (Human).